Consider the following 37-residue polypeptide: Large ribosomal subunit protein bL36 (37 aa).

This sequence belongs to the bacterial ribosomal protein bL36 family.

In Chromohalobacter salexigens (strain ATCC BAA-138 / DSM 3043 / CIP 106854 / NCIMB 13768 / 1H11), this protein is Large ribosomal subunit protein bL36.